Consider the following 117-residue polypeptide: Large ribosomal subunit protein bL17 (117 aa).

The protein belongs to the bacterial ribosomal protein bL17 family. In terms of assembly, part of the 50S ribosomal subunit. Contacts protein L32.

The chain is Large ribosomal subunit protein bL17 from Campylobacter jejuni subsp. doylei (strain ATCC BAA-1458 / RM4099 / 269.97).